A 252-amino-acid polypeptide reads, in one-letter code: 2-succinyl-6-hydroxy-2,4-cyclohexadiene-1-carboxylate synthase (252 aa).

It belongs to the AB hydrolase superfamily. MenH family. In terms of assembly, monomer.

It carries out the reaction 5-enolpyruvoyl-6-hydroxy-2-succinyl-cyclohex-3-ene-1-carboxylate = (1R,6R)-6-hydroxy-2-succinyl-cyclohexa-2,4-diene-1-carboxylate + pyruvate. The protein operates within quinol/quinone metabolism; 1,4-dihydroxy-2-naphthoate biosynthesis; 1,4-dihydroxy-2-naphthoate from chorismate: step 3/7. Its pathway is quinol/quinone metabolism; menaquinone biosynthesis. Catalyzes a proton abstraction reaction that results in 2,5-elimination of pyruvate from 2-succinyl-5-enolpyruvyl-6-hydroxy-3-cyclohexene-1-carboxylate (SEPHCHC) and the formation of 2-succinyl-6-hydroxy-2,4-cyclohexadiene-1-carboxylate (SHCHC). This chain is 2-succinyl-6-hydroxy-2,4-cyclohexadiene-1-carboxylate synthase, found in Salmonella agona (strain SL483).